The following is a 203-amino-acid chain: CS5 fimbrial subunit (203 aa).

An N-terminal signal peptide occupies residues 1 to 22; the sequence is MKKNLLITSVLAMATVSGSVLA.

It localises to the fimbrium. Major subunit of fimbriae. Fimbriae (also called pili), are polar filaments radiating from the surface of the bacterium to a length of 0.5-1.5 micrometers and numbering 100-300 per cell. They enable bacteria to colonize the epithelium of specific host organs. This chain is CS5 fimbrial subunit, found in Escherichia coli.